The chain runs to 1373 residues: Ribonuclease 3 (1373 aa).

Disordered stretches follow at residues 1 to 99 (MQGN…PVRP), 119 to 406 (MPPP…EEEL), and 447 to 496 (FEEE…SSSS). Low complexity predominate over residues 47–69 (PAQYQYEPPSAPSSSYSNSQAPS). Composition is skewed to pro residues over residues 70–99 (FMPPRPDFVPYPPPAAPSAQGPLPPCPVRP), 119–133 (MPPPMPCPNNPPASG), and 144–159 (MVPPPSMPHPPPPPVM). Composition is skewed to low complexity over residues 160 to 169 (PQQVNYQYPP) and 185 to 200 (NNSSSFPPSANSSSTP). Basic and acidic residues-rich tracts occupy residues 214-271 (QNER…DRGR), 278-288 (RSYERSRERDR), and 297-312 (RRSPSLERSYKKEYKR). Phosphoserine is present on residues Ser-354 and Ser-372. 2 stretches are compositionally biased toward basic and acidic residues: residues 363–398 (RWEEEKDRWSDSQGSGKEKNYTSIKEKEAEEVPPEK) and 447–459 (FEEELGNRQEKAK). Residues 389 to 1364 (KEAEEVPPEK…RWEREHQERE (976 aa)) form a necessary for interaction with DGCR8 and pri-miRNA processing activity region. Residues 474–490 (EDLESSSESECETDDDS) show a composition bias toward acidic residues. Residues Cys-535, Cys-537, His-548, Cys-560, His-608, Cys-675, and His-679 each coordinate Zn(2+). RNase III domains are found at residues 875 to 1055 (LMHL…LEGS) and 1106 to 1232 (LTEF…IDKD). Residue Glu-968 coordinates Mg(2+). His-1025 lines the Zn(2+) pocket. Positions 1041, 1044, 1146, 1218, and 1221 each coordinate Mg(2+). Residues 1259–1333 (DPKSQLQQCC…AMDALEKYNF (75 aa)) enclose the DRBM domain.

It belongs to the ribonuclease III family. As to quaternary structure, component of the microprocessor complex, or pri-miRNA processing protein complex, which is composed of DROSHA and DGCR8. The microprocessor complex is a heterotrimer; each of the two DROSHA RNase III domains binds one DGCR8 (via C-terminal region). Interacts with SP1 and SNIP1. Interacts with SRRT/ARS2. Interacts with CPSF3 and ISY1; this interaction is in an RNA dependent manner. Interacts with PUS10; interaction promotes pri-miRNAs processing. Mg(2+) serves as cofactor. It depends on Mn(2+) as a cofactor. Degraded by autophagy in response to neuronal activity in motor neurons. In terms of tissue distribution, expressed in motor neurons (at protein level).

Its subcellular location is the nucleus. The protein resides in the nucleolus. It is found in the cytoplasm. It carries out the reaction Endonucleolytic cleavage to 5'-phosphomonoester.. In terms of biological role, ribonuclease III double-stranded (ds) RNA-specific endoribonuclease that is involved in the initial step of microRNA (miRNA) biogenesis. Component of the microprocessor complex that is required to process primary miRNA transcripts (pri-miRNAs) to release precursor miRNA (pre-miRNA) in the nucleus. Within the microprocessor complex, DROSHA cleaves the 3' and 5' strands of a stem-loop in pri-miRNAs (processing center 11 bp from the dsRNA-ssRNA junction) to release hairpin-shaped pre-miRNAs that are subsequently cut by the cytoplasmic DICER to generate mature miRNAs. Involved also in pre-rRNA processing. Cleaves double-strand RNA and does not cleave single-strand RNA. Involved in the formation of GW bodies. Plays a role in growth homeostasis in response to autophagy in motor neurons. The sequence is that of Ribonuclease 3 (Drosha) from Mus musculus (Mouse).